We begin with the raw amino-acid sequence, 365 residues long: Leu/Ile/Val/Thr-binding protein (365 aa).

Residues 1 to 21 (MKGKTLLAGCIALSLSHMAFA) form the signal peptide. A disulfide bond links Cys74 and Cys99.

This sequence belongs to the leucine-binding protein family.

Its subcellular location is the periplasm. Its function is as follows. This protein is a component of the leucine, isoleucine, valine, threonine transport system, which is one of the two periplasmic binding protein-dependent transport systems of the high-affinity transport of the branched-chain amino acids. The protein is Leu/Ile/Val/Thr-binding protein (livJ) of Salmonella typhimurium (strain LT2 / SGSC1412 / ATCC 700720).